The primary structure comprises 380 residues: Queuine tRNA-ribosyltransferase (380 aa).

Aspartate 96 (proton acceptor) is an active-site residue. Substrate-binding positions include aspartate 96–phenylalanine 100, aspartate 150, glutamine 193, and glycine 220. The segment at glycine 251–serine 257 is RNA binding. The active-site Nucleophile is the aspartate 270. Positions threonine 275–arginine 279 are RNA binding; important for wobble base 34 recognition. Zn(2+) is bound by residues cysteine 308, cysteine 310, cysteine 313, and histidine 339.

The protein belongs to the queuine tRNA-ribosyltransferase family. In terms of assembly, homodimer. Within each dimer, one monomer is responsible for RNA recognition and catalysis, while the other monomer binds to the replacement base PreQ1. The cofactor is Zn(2+).

The catalysed reaction is 7-aminomethyl-7-carbaguanine + guanosine(34) in tRNA = 7-aminomethyl-7-carbaguanosine(34) in tRNA + guanine. It functions in the pathway tRNA modification; tRNA-queuosine biosynthesis. In terms of biological role, catalyzes the base-exchange of a guanine (G) residue with the queuine precursor 7-aminomethyl-7-deazaguanine (PreQ1) at position 34 (anticodon wobble position) in tRNAs with GU(N) anticodons (tRNA-Asp, -Asn, -His and -Tyr). Catalysis occurs through a double-displacement mechanism. The nucleophile active site attacks the C1' of nucleotide 34 to detach the guanine base from the RNA, forming a covalent enzyme-RNA intermediate. The proton acceptor active site deprotonates the incoming PreQ1, allowing a nucleophilic attack on the C1' of the ribose to form the product. After dissociation, two additional enzymatic reactions on the tRNA convert PreQ1 to queuine (Q), resulting in the hypermodified nucleoside queuosine (7-(((4,5-cis-dihydroxy-2-cyclopenten-1-yl)amino)methyl)-7-deazaguanosine). The protein is Queuine tRNA-ribosyltransferase of Streptococcus suis (strain 98HAH33).